A 321-amino-acid chain; its full sequence is Acetyl-coenzyme A carboxylase carboxyl transferase subunit beta, chloroplastic (321 aa).

The CoA carboxyltransferase N-terminal domain maps to 47–321 (LWAQCDNCEN…FWFYVLRSSL (275 aa)). Cysteine 51, cysteine 54, cysteine 70, and cysteine 73 together coordinate Zn(2+). Residues 51–73 (CDNCENLLYLRFLRENQSVCKEC) form a C4-type zinc finger.

Belongs to the AccD/PCCB family. In terms of assembly, acetyl-CoA carboxylase is a heterohexamer composed of biotin carboxyl carrier protein, biotin carboxylase and 2 subunits each of ACCase subunit alpha and ACCase plastid-coded subunit beta (accD). The cofactor is Zn(2+).

Its subcellular location is the plastid. It localises to the chloroplast stroma. The enzyme catalyses N(6)-carboxybiotinyl-L-lysyl-[protein] + acetyl-CoA = N(6)-biotinyl-L-lysyl-[protein] + malonyl-CoA. The protein operates within lipid metabolism; malonyl-CoA biosynthesis; malonyl-CoA from acetyl-CoA: step 1/1. Component of the acetyl coenzyme A carboxylase (ACC) complex. Biotin carboxylase (BC) catalyzes the carboxylation of biotin on its carrier protein (BCCP) and then the CO(2) group is transferred by the transcarboxylase to acetyl-CoA to form malonyl-CoA. The polypeptide is Acetyl-coenzyme A carboxylase carboxyl transferase subunit beta, chloroplastic (Pinus thunbergii (Japanese black pine)).